The following is a 195-amino-acid chain: Probable GTP-binding protein EngB (195 aa).

An EngB-type G domain is found at 24 to 195; sequence ELPEIALAGR…EAWDAILEKL (172 aa). GTP contacts are provided by residues 32 to 39, 59 to 63, 77 to 80, 144 to 147, and 176 to 178; these read GRSNVGKS, GKTQL, DVPG, TKAD, and FSS. Ser-39 and Thr-61 together coordinate Mg(2+).

This sequence belongs to the TRAFAC class TrmE-Era-EngA-EngB-Septin-like GTPase superfamily. EngB GTPase family. Mg(2+) is required as a cofactor.

In terms of biological role, necessary for normal cell division and for the maintenance of normal septation. This chain is Probable GTP-binding protein EngB, found in Streptococcus pneumoniae (strain Hungary19A-6).